We begin with the raw amino-acid sequence, 284 residues long: 1D-myo-inositol 2-acetamido-2-deoxy-alpha-D-glucopyranoside deacetylase (284 aa).

His12, Asp15, and His146 together coordinate Zn(2+).

This sequence belongs to the MshB deacetylase family. Zn(2+) serves as cofactor.

It catalyses the reaction 1D-myo-inositol 2-acetamido-2-deoxy-alpha-D-glucopyranoside + H2O = 1D-myo-inositol 2-amino-2-deoxy-alpha-D-glucopyranoside + acetate. Its function is as follows. Catalyzes the deacetylation of 1D-myo-inositol 2-acetamido-2-deoxy-alpha-D-glucopyranoside (GlcNAc-Ins) in the mycothiol biosynthesis pathway. This chain is 1D-myo-inositol 2-acetamido-2-deoxy-alpha-D-glucopyranoside deacetylase, found in Mycolicibacterium gilvum (strain PYR-GCK) (Mycobacterium gilvum (strain PYR-GCK)).